Here is a 291-residue protein sequence, read N- to C-terminus: Acetyl-coenzyme A carboxylase carboxyl transferase subunit beta (291 aa).

The CoA carboxyltransferase N-terminal domain occupies 29–291 (IMTKCPQCKK…TGGEREWLEN (263 aa)). Residues C33, C36, C52, and C55 each contribute to the Zn(2+) site. The segment at 33 to 55 (CPQCKKIMLTKELDKNLRVCMNC) adopts a C4-type zinc-finger fold.

This sequence belongs to the AccD/PCCB family. In terms of assembly, acetyl-CoA carboxylase is a heterohexamer composed of biotin carboxyl carrier protein (AccB), biotin carboxylase (AccC) and two subunits each of ACCase subunit alpha (AccA) and ACCase subunit beta (AccD). The cofactor is Zn(2+).

It localises to the cytoplasm. It carries out the reaction N(6)-carboxybiotinyl-L-lysyl-[protein] + acetyl-CoA = N(6)-biotinyl-L-lysyl-[protein] + malonyl-CoA. It participates in lipid metabolism; malonyl-CoA biosynthesis; malonyl-CoA from acetyl-CoA: step 1/1. Functionally, component of the acetyl coenzyme A carboxylase (ACC) complex. Biotin carboxylase (BC) catalyzes the carboxylation of biotin on its carrier protein (BCCP) and then the CO(2) group is transferred by the transcarboxylase to acetyl-CoA to form malonyl-CoA. In Bacillus pumilus (strain SAFR-032), this protein is Acetyl-coenzyme A carboxylase carboxyl transferase subunit beta.